The sequence spans 732 residues: Aldehyde oxidoreductase molybdenum-binding subunit PaoC (732 aa).

Residues 241-242, 468-470, 511-512, 615-621, Gln-625, and 688-691 contribute to the Mo-molybdopterin cytosine dinucleotide site; these read GF, IGT, GA, RILNPKT, and KGVG. The active-site Proton acceptor is Glu-692.

This sequence belongs to the xanthine dehydrogenase family. As to quaternary structure, heterotrimer composed of PaoA, PaoB and PaoC. Mo-molybdopterin cytosine dinucleotide serves as cofactor.

It localises to the periplasm. It carries out the reaction an aldehyde + A + H2O = a carboxylate + AH2 + H(+). Its activity is regulated as follows. The complex requires PaoD for activity. In terms of biological role, oxidizes aldehydes to the corresponding carboxylic acids with a preference for aromatic aldehydes. It might play a role in the detoxification of aldehydes to avoid cell damage. In Escherichia coli (strain K12), this protein is Aldehyde oxidoreductase molybdenum-binding subunit PaoC.